The primary structure comprises 313 residues: Tyrosine recombinase XerC (313 aa).

One can recognise a Core-binding (CB) domain in the interval 1–85; that stretch reads MNDQVEAFLR…AVKSFFAFLT (85 aa). A Tyr recombinase domain is found at 106 to 291; that stretch reads DLPRALTPHQ…NHASSAQPVR (186 aa). Catalysis depends on residues Arg-147, Lys-171, His-243, Arg-246, and His-269. Residue Tyr-278 is the O-(3'-phospho-DNA)-tyrosine intermediate of the active site.

It belongs to the 'phage' integrase family. XerC subfamily. Forms a cyclic heterotetrameric complex composed of two molecules of XerC and two molecules of XerD.

It is found in the cytoplasm. Functionally, site-specific tyrosine recombinase, which acts by catalyzing the cutting and rejoining of the recombining DNA molecules. The XerC-XerD complex is essential to convert dimers of the bacterial chromosome into monomers to permit their segregation at cell division. It also contributes to the segregational stability of plasmids. This chain is Tyrosine recombinase XerC, found in Roseiflexus sp. (strain RS-1).